Consider the following 446-residue polypeptide: N-succinylarginine dihydrolase (446 aa).

Substrate is bound by residues 19–28, Asn110, and 137–138; these read AGLSFGNVAS and HR. Residue Glu174 is part of the active site. Substrate is bound at residue Arg213. His249 is an active-site residue. Substrate contacts are provided by Asp251 and Asn364. The active-site Nucleophile is Cys370.

The protein belongs to the succinylarginine dihydrolase family. As to quaternary structure, homodimer.

It carries out the reaction N(2)-succinyl-L-arginine + 2 H2O + 2 H(+) = N(2)-succinyl-L-ornithine + 2 NH4(+) + CO2. It participates in amino-acid degradation; L-arginine degradation via AST pathway; L-glutamate and succinate from L-arginine: step 2/5. Functionally, catalyzes the hydrolysis of N(2)-succinylarginine into N(2)-succinylornithine, ammonia and CO(2). The polypeptide is N-succinylarginine dihydrolase (Burkholderia cenocepacia (strain ATCC BAA-245 / DSM 16553 / LMG 16656 / NCTC 13227 / J2315 / CF5610) (Burkholderia cepacia (strain J2315))).